A 198-amino-acid polypeptide reads, in one-letter code: Holliday junction branch migration complex subunit RuvA (198 aa).

The interval 1–63 is domain I; that stretch reads MYDYIKGQLT…EDAQLLFGFH (63 aa). Positions 64 to 142 are domain II; it reads SEEEKDVFLK…EAPKEESSKP (79 aa). The flexible linker stretch occupies residues 143 to 147; that stretch reads PKAKQ. The interval 148–198 is domain III; the sequence is QGNEQLDEAVEALLALGYKATELKKIRAFFEGTSETAEQYIKSALKMLMKG.

It belongs to the RuvA family. As to quaternary structure, homotetramer. Forms an RuvA(8)-RuvB(12)-Holliday junction (HJ) complex. HJ DNA is sandwiched between 2 RuvA tetramers; dsDNA enters through RuvA and exits via RuvB. An RuvB hexamer assembles on each DNA strand where it exits the tetramer. Each RuvB hexamer is contacted by two RuvA subunits (via domain III) on 2 adjacent RuvB subunits; this complex drives branch migration. In the full resolvosome a probable DNA-RuvA(4)-RuvB(12)-RuvC(2) complex forms which resolves the HJ.

Its subcellular location is the cytoplasm. Its function is as follows. The RuvA-RuvB-RuvC complex processes Holliday junction (HJ) DNA during genetic recombination and DNA repair, while the RuvA-RuvB complex plays an important role in the rescue of blocked DNA replication forks via replication fork reversal (RFR). RuvA specifically binds to HJ cruciform DNA, conferring on it an open structure. The RuvB hexamer acts as an ATP-dependent pump, pulling dsDNA into and through the RuvAB complex. HJ branch migration allows RuvC to scan DNA until it finds its consensus sequence, where it cleaves and resolves the cruciform DNA. The chain is Holliday junction branch migration complex subunit RuvA from Streptococcus equi subsp. zooepidemicus (strain H70).